We begin with the raw amino-acid sequence, 342 residues long: Cytosolic Fe-S cluster assembly factor NBP35 (342 aa).

Residues 16 to 42 (SKAAPKLVAPEPEHCPGPESEQAGKGD) form a disordered region. The [4Fe-4S] cluster site is built by C30, C44, C47, and C53. Position 83–90 (83–90 (GKGGVGKS)) interacts with ATP. [4Fe-4S] cluster contacts are provided by C256 and C259.

The protein belongs to the Mrp/NBP35 ATP-binding proteins family. NUBP1/NBP35 subfamily. In terms of assembly, heterotetramer of 2 NBP35 and 2 CFD1 chains. [4Fe-4S] cluster serves as cofactor.

Its subcellular location is the cytoplasm. Functionally, component of the cytosolic iron-sulfur (Fe/S) protein assembly (CIA) machinery. Required for maturation of extramitochondrial Fe-S proteins. The NBP35-CFD1 heterotetramer forms a Fe-S scaffold complex, mediating the de novo assembly of an Fe-S cluster and its transfer to target apoproteins. The chain is Cytosolic Fe-S cluster assembly factor NBP35 from Coccidioides immitis (strain RS) (Valley fever fungus).